A 450-amino-acid chain; its full sequence is UDP-N-acetylmuramoylalanine--D-glutamate ligase (450 aa).

119-125 is an ATP binding site; sequence GSNGKTT.

This sequence belongs to the MurCDEF family.

The protein localises to the cytoplasm. The catalysed reaction is UDP-N-acetyl-alpha-D-muramoyl-L-alanine + D-glutamate + ATP = UDP-N-acetyl-alpha-D-muramoyl-L-alanyl-D-glutamate + ADP + phosphate + H(+). Its pathway is cell wall biogenesis; peptidoglycan biosynthesis. Cell wall formation. Catalyzes the addition of glutamate to the nucleotide precursor UDP-N-acetylmuramoyl-L-alanine (UMA). The chain is UDP-N-acetylmuramoylalanine--D-glutamate ligase from Bacillus thuringiensis (strain Al Hakam).